Consider the following 129-residue polypeptide: Large ribosomal subunit protein bL17 (129 aa).

It belongs to the bacterial ribosomal protein bL17 family. Part of the 50S ribosomal subunit. Contacts protein L32.

The polypeptide is Large ribosomal subunit protein bL17 (Desulfotalea psychrophila (strain LSv54 / DSM 12343)).